Reading from the N-terminus, the 601-residue chain is NADH-ubiquinone oxidoreductase chain 5 (601 aa).

17 consecutive transmembrane segments (helical) span residues 5 to 25 (ITSL…TLSF), 37 to 54 (YMRN…IYID), 83 to 105 (YCLT…SLWY), 112 to 129 (TLFF…LFFL), 134 to 156 (LLQL…NWWH), 169 to 189 (IIYN…SALF), 209 to 231 (WLPL…LHPW), 240 to 260 (TPVS…FLLI), 271 to 291 (MIIS…ALCA), 300 to 320 (IIAF…GINQ), 323 to 343 (LAFL…LCSA), 363 to 383 (LILP…MGMP), 400 to 420 (MSYV…LTSI), 451 to 471 (PLIR…TFFL), 478 to 498 (FSIP…VSSL), 508 to 528 (FSHM…AIFH), and 581 to 601 (NYIT…ALYF).

This sequence belongs to the complex I subunit 5 family.

It localises to the mitochondrion inner membrane. It catalyses the reaction a ubiquinone + NADH + 5 H(+)(in) = a ubiquinol + NAD(+) + 4 H(+)(out). In terms of biological role, core subunit of the mitochondrial membrane respiratory chain NADH dehydrogenase (Complex I) that is believed to belong to the minimal assembly required for catalysis. Complex I functions in the transfer of electrons from NADH to the respiratory chain. The immediate electron acceptor for the enzyme is believed to be ubiquinone. The protein is NADH-ubiquinone oxidoreductase chain 5 (MT-ND5) of Myxine glutinosa (Atlantic hagfish).